Here is a 143-residue protein sequence, read N- to C-terminus: 3-hydroxyacyl-[acyl-carrier-protein] dehydratase FabZ (143 aa).

Residue His49 is part of the active site.

It belongs to the thioester dehydratase family. FabZ subfamily.

The protein resides in the cytoplasm. The catalysed reaction is a (3R)-hydroxyacyl-[ACP] = a (2E)-enoyl-[ACP] + H2O. Its function is as follows. Involved in unsaturated fatty acids biosynthesis. Catalyzes the dehydration of short chain beta-hydroxyacyl-ACPs and long chain saturated and unsaturated beta-hydroxyacyl-ACPs. This chain is 3-hydroxyacyl-[acyl-carrier-protein] dehydratase FabZ, found in Wolbachia pipientis wMel.